A 108-amino-acid polypeptide reads, in one-letter code: Resistin (108 aa).

The signal sequence occupies residues 1–18; it reads MKALCLLLLPVLGLLVSS. Disulfide bonds link Cys51/Cys104, Cys63/Cys103, Cys72/Cys89, Cys74/Cys91, and Cys78/Cys93.

Belongs to the resistin/FIZZ family. As to quaternary structure, homodimer; disulfide-linked. Interacts with DEFA1. As to expression, expressed in white adipose tissue (at protein level). Widely expressed, with particularly strong expression in lung, bone marrow, breast and peripheral blood. Expressed strongly in bone marrow and at lower levels in lung, but not detected in other tissues. Isoform 2 is detected in adipose tissue, bone marrow, brain, lung, peripheral blood, placenta and thymus.

The protein localises to the secreted. Hormone that seems to suppress insulin ability to stimulate glucose uptake into adipose cells. Potentially links obesity to diabetes. Promotes chemotaxis in myeloid cells. This chain is Resistin (RETN), found in Homo sapiens (Human).